The primary structure comprises 243 residues: 7-cyano-7-deazaguanine synthase (243 aa).

18-28 lines the ATP pocket; sequence FSGGQDSATCL. Residues C206, C221, C224, and C227 each contribute to the Zn(2+) site.

This sequence belongs to the QueC family. The cofactor is Zn(2+).

The catalysed reaction is 7-carboxy-7-deazaguanine + NH4(+) + ATP = 7-cyano-7-deazaguanine + ADP + phosphate + H2O + H(+). The protein operates within purine metabolism; 7-cyano-7-deazaguanine biosynthesis. Catalyzes the ATP-dependent conversion of 7-carboxy-7-deazaguanine (CDG) to 7-cyano-7-deazaguanine (preQ(0)). The polypeptide is 7-cyano-7-deazaguanine synthase (Methylorubrum extorquens (strain CM4 / NCIMB 13688) (Methylobacterium extorquens)).